The sequence spans 687 residues: Glycine--tRNA ligase beta subunit (687 aa).

This sequence belongs to the class-II aminoacyl-tRNA synthetase family. In terms of assembly, tetramer of two alpha and two beta subunits.

The protein localises to the cytoplasm. The enzyme catalyses tRNA(Gly) + glycine + ATP = glycyl-tRNA(Gly) + AMP + diphosphate. In Citrifermentans bemidjiense (strain ATCC BAA-1014 / DSM 16622 / JCM 12645 / Bem) (Geobacter bemidjiensis), this protein is Glycine--tRNA ligase beta subunit.